Consider the following 183-residue polypeptide: 2-hydroxy-1,4-benzoquinone reductase (183 aa).

FMN contacts are provided by residues 11-18 (SLRRDSFN), 77-80 (EYNR), and S113.

Belongs to the SsuE family. As to quaternary structure, homotetramer. It depends on FMN as a cofactor.

The catalysed reaction is 2-hydroxy-1,4-benzoquinone + NADH + 2 H(+) = benzene-1,2,4-triol + NAD(+). Functionally, involved in the metabolism of 4-aminophenol. Catalyzes the reduction of the auto-oxidation product 2-hydroxy-1,4-benzoquinone back to hydroxyquinol. Has a broad substrate specificity toward benzoquinones, converting them to the corresponding 1,4-benzenediols. This Burkholderia sp protein is 2-hydroxy-1,4-benzoquinone reductase.